We begin with the raw amino-acid sequence, 78 residues long: uncharacterized protein (78 aa).

Helical transmembrane passes span 5 to 24 and 39 to 61; these read LALL…IKLM and LWLQ…AGFI.

The protein localises to the cell membrane. This is an uncharacterized protein from Bacillus subtilis (strain 168).